A 187-amino-acid chain; its full sequence is MLSSLSPYMANPRNTLSQVLNFGLVLSSAFMVWKALSVITNSASPVVVVLSGSMEPAFQRGDLLFLWNRSPRVDVGEIVVYNVQGKDIPIVHRVMRVFPDVPTTGAKDVEGVEASQKLLTKGDNNLSDDTELYAPGQEFLDRKTDLMGSVRGYVPAIGYVTIMLSEHPWLKSVLLGFMGLMVMLQRE.

Residues 1 to 18 (MLSSLSPYMANPRNTLSQ) are Cytoplasmic-facing. Residues 19 to 39 (VLNFGLVLSSAFMVWKALSVI) form a helical; Signal-anchor for type II membrane protein membrane-spanning segment. Over 40–187 (TNSASPVVVV…MGLMVMLQRE (148 aa)) the chain is Lumenal. Active-site charge relay system residues include Ser-53 and His-92. An N-linked (GlcNAc...) asparagine glycan is attached at Asn-125. Residue Asp-129 is the Charge relay system of the active site. The C-terminal short (CTS) helix stretch occupies residues 173–184 (VLLGFMGLMVML).

Belongs to the peptidase S26B family. As to quaternary structure, component of the signal peptidase complex (SPC) composed of a catalytic subunit SEC11 and three accessory subunits SPC1, SPC2 and SPC3. The complex induces a local thinning of the ER membrane which is used to measure the length of the signal peptide (SP) h-region of protein substrates. This ensures the selectivity of the complex towards h-regions shorter than 18-20 amino acids. SPC associates with the translocon complex.

It localises to the endoplasmic reticulum membrane. The catalysed reaction is Cleavage of hydrophobic, N-terminal signal or leader sequences from secreted and periplasmic proteins.. Its function is as follows. Catalytic component of the signal peptidase complex (SPC) which catalyzes the cleavage of N-terminal signal sequences from nascent proteins as they are translocated into the lumen of the endoplasmic reticulum. Specifically cleaves N-terminal signal peptides that contain a hydrophobic alpha-helix (h-region) shorter than 18-20 amino acids. The polypeptide is Signal peptidase complex catalytic subunit SEC11 (SEC11) (Ajellomyces capsulatus (strain NAm1 / WU24) (Darling's disease fungus)).